A 517-amino-acid chain; its full sequence is Ascochitine biosynthesis cluster MFS transporter (517 aa).

The span at 1 to 12 shows a compositional bias: basic and acidic residues; the sequence is MSPDSRDPEAQR. Residues 1-45 are disordered; the sequence is MSPDSRDPEAQRDVGLTKNTSSVNIPLESVKTDKTSNASPIMGPG. N19 is a glycosylation site (N-linked (GlcNAc...) asparagine). The next 12 helical transmembrane spans lie at 75 to 95, 111 to 131, 141 to 161, 172 to 192, 204 to 224, 232 to 252, 308 to 328, 347 to 367, 390 to 410, 421 to 441, 457 to 475, and 485 to 505; these read WVITWLLSFLNVWVTFSSTIF, VVMTLGVSLTVLGFAVGPLIW, LTPFYFGYAVFCIFQIPVGVA, FFIGFFGTSAMAVTPGVLADI, VYAAAAFIGPIFGPIVGGFVV, WTAWITLILASAFGLAALVFV, ILLLVTLYISLVYGVLYLFFV, ALPLLAVMLGTLAGCLTILFV, LMMVGSVSLPIGLFWFGWTSS, AGFPIGIGLALIWVQGLSFLI, LIRSAVGAAFPLFGAPMYH, and LLGFLSVAMIPIPVAFYYYGP.

It belongs to the major facilitator superfamily. CAR1 family.

The protein localises to the membrane. Its function is as follows. MFS transporter; part of the gene cluster that mediates the biosynthesis the mycotoxin ascochitine, an o-quinone methide that plays a possible protective role against other microbial competitors in nature and is considered to be important for pathogenicity of legume-associated Didymella species. This chain is Ascochitine biosynthesis cluster MFS transporter, found in Didymella fabae (Leaf and pod spot disease fungus).